The primary structure comprises 573 residues: Phosphoenolpyruvate-protein phosphotransferase (573 aa).

H190 (tele-phosphohistidine intermediate) is an active-site residue. Phosphoenolpyruvate is bound by residues R297 and R332. Mg(2+)-binding residues include E431 and D455. Residues 454–455 (ND) and R465 contribute to the phosphoenolpyruvate site. The active-site Proton donor is C502.

It belongs to the PEP-utilizing enzyme family. In terms of assembly, homodimer. Requires Mg(2+) as cofactor.

It localises to the cytoplasm. It catalyses the reaction L-histidyl-[protein] + phosphoenolpyruvate = N(pros)-phospho-L-histidyl-[protein] + pyruvate. Irreversibly inhibited the sulfhydryl reagent N-ethylmaleimide (NEM). Its function is as follows. General (non sugar-specific) component of the phosphoenolpyruvate-dependent sugar phosphotransferase system (sugar PTS). This major carbohydrate active-transport system catalyzes the phosphorylation of incoming sugar substrates concomitantly with their translocation across the cell membrane. Enzyme I transfers the phosphoryl group from phosphoenolpyruvate (PEP) to the phosphoryl carrier protein (HPr). This chain is Phosphoenolpyruvate-protein phosphotransferase (ptsI), found in Mycoplasma capricolum subsp. capricolum (strain California kid / ATCC 27343 / NCTC 10154).